The primary structure comprises 525 residues: GMP synthase [glutamine-hydrolyzing] (525 aa).

Residues 9–207 enclose the Glutamine amidotransferase type-1 domain; it reads RILILDFGSQ…VLTISGCEAL (199 aa). Residue cysteine 86 is the Nucleophile of the active site. Residues histidine 181 and glutamate 183 contribute to the active site. A GMPS ATP-PPase domain is found at 208 to 400; sequence WTPAKIVDDA…LGLPYDMVYR (193 aa). 235–241 provides a ligand contact to ATP; sequence SGGVDSS.

As to quaternary structure, homodimer.

It catalyses the reaction XMP + L-glutamine + ATP + H2O = GMP + L-glutamate + AMP + diphosphate + 2 H(+). The protein operates within purine metabolism; GMP biosynthesis; GMP from XMP (L-Gln route): step 1/1. Its function is as follows. Catalyzes the synthesis of GMP from XMP. This is GMP synthase [glutamine-hydrolyzing] from Marinobacter nauticus (strain ATCC 700491 / DSM 11845 / VT8) (Marinobacter aquaeolei).